The sequence spans 376 residues: MLSVPASSRIDFAGSPRPTVGVEWEFALVDAHTRDLSNEAATVIAEIGETPHVHKELLRNTVEVVTGICENTGEAMADLHDTLKVVRRIVRDRGMELFCAGTHPFANWSTQQLTDAPRYAELIKRTQWWGRQMLIWGVHVHVGISSAHKVMPIISSLLNQYPHLLALSASSPYWDGSDTGYASNRAMMFQQLPTAGLPFQFQSWPEFERFVHDQKKTGIIDHMNEIRWDIRPSPHLGTVEIRVFDGVSNIAELGSLVALTHCLVVDLDRRLDAGEQLPVMPPWHVQENKWRAARYGLDAEIILDADSNERLVTEDLDDLLTRLQPVARSLDCADELAGVAEIYRHGASYQRQRRVAEEHDGDLLAVVDALVAELEL.

It belongs to the glutamate--cysteine ligase type 2 family. YbdK subfamily.

It catalyses the reaction L-cysteine + L-glutamate + ATP = gamma-L-glutamyl-L-cysteine + ADP + phosphate + H(+). Its function is as follows. ATP-dependent carboxylate-amine ligase which exhibits weak glutamate--cysteine ligase activity. This is Putative glutamate--cysteine ligase 2-1 from Mycobacterium sp. (strain KMS).